The primary structure comprises 74 residues: ATP synthase subunit 9, mitochondrial (74 aa).

The next 2 helical transmembrane spans lie at 12–32 (LATI…AALI) and 50–70 (ILGF…AFLL).

It belongs to the ATPase C chain family. In terms of assembly, F-type ATPases have 2 components, CF(1) - the catalytic core - and CF(0) - the membrane proton channel. CF(1) has five subunits: alpha(3), beta(3), gamma(1), delta(1), epsilon(1). CF(0) has three main subunits: a, b and c.

Its subcellular location is the mitochondrion membrane. Its function is as follows. Mitochondrial membrane ATP synthase (F(1)F(0) ATP synthase or Complex V) produces ATP from ADP in the presence of a proton gradient across the membrane which is generated by electron transport complexes of the respiratory chain. F-type ATPases consist of two structural domains, F(1) - containing the extramembraneous catalytic core and F(0) - containing the membrane proton channel, linked together by a central stalk and a peripheral stalk. During catalysis, ATP synthesis in the catalytic domain of F(1) is coupled via a rotary mechanism of the central stalk subunits to proton translocation. Part of the complex F(0) domain. A homomeric c-ring of probably 10 subunits is part of the complex rotary element. The protein is ATP synthase subunit 9, mitochondrial of Rhizopus oryzae (Mucormycosis agent).